A 349-amino-acid polypeptide reads, in one-letter code: Isopentenyl-diphosphate delta-isomerase (349 aa).

6–7 (RK) serves as a coordination point for substrate. FMN is bound by residues 62-64 (AMT), serine 93, and asparagine 122. Position 152 (glutamine 152) interacts with substrate. Glutamate 153 serves as a coordination point for Mg(2+). FMN is bound by residues lysine 184, threonine 214, 258-259 (GG), and 280-281 (AG).

It belongs to the IPP isomerase type 2 family. As to quaternary structure, homooctamer. Dimer of tetramers. FMN serves as cofactor. It depends on NADPH as a cofactor. Requires Mg(2+) as cofactor.

It is found in the cytoplasm. The catalysed reaction is isopentenyl diphosphate = dimethylallyl diphosphate. Its function is as follows. Involved in the biosynthesis of isoprenoids. Catalyzes the 1,3-allylic rearrangement of the homoallylic substrate isopentenyl (IPP) to its allylic isomer, dimethylallyl diphosphate (DMAPP). The chain is Isopentenyl-diphosphate delta-isomerase from Bacillus cereus (strain AH187).